The following is a 1044-amino-acid chain: Sarcoplasmic/endoplasmic reticulum calcium ATPase 2 (1044 aa).

The Cytoplasmic segment spans residues 1–48 (MENAHTKTVEEVLGHFGVNESTGLSLEQVKKLKERWGSNELPAEEGKT). At Ser38 the chain carries Phosphoserine. Residues 49–69 (LLELVIEQFEDLLVRILLLAA) traverse the membrane as a helical segment. The Lumenal segment spans residues 70–89 (CISFVLAWFEEGEETITAFV). The chain crosses the membrane as a helical span at residues 90–110 (EPFVILLILVANAIVGVWQER). The Cytoplasmic segment spans residues 111 to 253 (NAENAIEALK…QERTPLQQKL (143 aa)). Residues 254 to 273 (DEFGEQLSKVISLICIAVWI) form a helical membrane-spanning segment. Residues 274-295 (INIGHFNDPVHGGSWIRGAIYY) lie on the Lumenal side of the membrane. 3'-nitrotyrosine occurs at positions 294 and 295. Residues 296–313 (FKIAVALAVAAIPEGLPA) form a helical membrane-spanning segment. Residues Val304, Ala305, Ile307, and Glu309 each coordinate Ca(2+). At 314–756 (VITTCLALGT…EEGRAIYNNM (443 aa)) the chain is on the cytoplasmic side. The active-site 4-aspartylphosphate intermediate is the Asp351. Mg(2+)-binding residues include Asp351 and Thr353. Thr353 contributes to the ATP binding site. Residue Thr441 is modified to Phosphothreonine. Positions 442, 489, and 514 each coordinate ATP. Ser531 carries the post-translational modification Phosphoserine. Arg559 is a binding site for ATP. An interaction with HAX1 region spans residues 575-594 (MHLEDSANFIKYETNLTFVG). Ser580 is modified (phosphoserine). 3 residues coordinate ATP: Thr624, Gly625, and Asp626. A phosphoserine mark is found at Ser661 and Ser663. Residues Arg677 and Lys683 each coordinate ATP. Asp702 lines the Mg(2+) pocket. Asn705 lines the ATP pocket. Residues 757 to 776 (KQFIRYLISSNVGEVVCIFL) form a helical membrane-spanning segment. Ca(2+) contacts are provided by Asn767 and Glu770. Residues 777-786 (TAALGFPEAL) lie on the Lumenal side of the membrane. A helical transmembrane segment spans residues 787 to 807 (IPVQLLWVNLVTDGLPATALG). Positions 787 to 807 (IPVQLLWVNLVTDGLPATALG) are interaction with PLN. Residues 788 to 1044 (PVQLLWVNLV…DTNFSDMFWS (257 aa)) form an interaction with TMEM64 and PDIA3 region. Residues Asn795, Thr798, and Asp799 each coordinate Ca(2+). Residues 808–827 (FNPPDLDIMNKPPRNPKEPL) are Cytoplasmic-facing. A helical transmembrane segment spans residues 828 to 850 (ISGWLFFRYLAIGCYVGAATVGA). Residues 851–896 (AAWWFIAADGGPRVSFYQLSHFLQCKEDNPDFDGVDCAIFESPYPM) lie on the Lumenal side of the membrane. Cys875 and Cys887 are disulfide-bonded. Residues 897–916 (TMALSVLVTIEMCNALNSLS) traverse the membrane as a helical segment. Glu907 is a binding site for Ca(2+). The Cytoplasmic portion of the chain corresponds to 917–929 (ENQSLLRMPPWEN). A helical transmembrane segment spans residues 930–948 (IWLVGSICLSMSLHFLILY). Residues 931-942 (WLVGSICLSMSL) form an interaction with PLN region. At 949–963 (VEPLPLIFQITPLNL) the chain is on the lumenal side. The helical transmembrane segment at 964-984 (TQWLMVLKISLPVILMDETLK) threads the bilayer. Over 985-1044 (FVARNYLEQPGKECVQPATKSSCSLSACTDGISWPFVLLIMPLVVWVYSTDTNFSDMFWS) the chain is Cytoplasmic.

Belongs to the cation transport ATPase (P-type) (TC 3.A.3) family. Type IIA subfamily. Interacts with sarcolipin (SLN); the interaction inhibits ATP2A2 Ca(2+) affinity. Interacts with phospholamban (PLN); the interaction inhibits ATP2A2 Ca(2+) affinity. Interacts with myoregulin (MRLN). Interacts with ARLN and ERLN; the interactions inhibit ATP2A2 Ca(2+) affinity. Interacts with STRIT1/DWORF; the interaction results in activation of ATP2A2. Interacts with the monomeric forms of SLN, PLN, ARLN, ERLN and STRI1/DWORF. Interacts with HAX1. Interacts with S100A8 and S100A9. Interacts with SLC35G1 and STIM1. Interacts with TMEM203. Interacts with TMEM64 and PDIA3. Interacts with TMX1. Interacts with TMX2. Interacts with VMP1; VMP1 competes with PLN and SLN to prevent them from forming an inhibitory complex with ATP2A2. Interacts with ULK1. Interacts with S100A1 in a Ca(2+)-dependent manner. Interacts with TUNAR. Interacts with FLVCR2; this interaction occurs in the absence of heme and promotes ATP2A2 proteasomal degradation; this complex is dissociated upon heme binding. Interacts with FNIP1. As to quaternary structure, interacts with TRAM2 (via C-terminus). Mg(2+) is required as a cofactor. Nitrated under oxidative stress. Nitration on the two tyrosine residues inhibits catalytic activity. Post-translationally, serotonylated on Gln residues by TGM2 in response to hypoxia, leading to its inactivation. In terms of tissue distribution, isoform 2 is highly expressed in heart and slow twitch skeletal muscle. Isoform 2 is widely expressed.

Its subcellular location is the endoplasmic reticulum membrane. The protein resides in the sarcoplasmic reticulum membrane. The catalysed reaction is Ca(2+)(in) + ATP + H2O = Ca(2+)(out) + ADP + phosphate + H(+). Its activity is regulated as follows. Has different conformational states with differential Ca2+ affinity. The E1 conformational state (active form) shows high Ca(2+) affinity, while the E2 state exhibits low Ca(2+) affinity. Binding of ATP allosterically increases its affinity for subsequent binding of Ca2+. Reversibly inhibited by phospholamban (PLN) at low calcium concentrations. PLN inhibits ATP2A2 Ca(2+) affinity by disrupting its allosteric activation by ATP. Inhibited by sarcolipin (SLN) and myoregulin (MRLN). The inhibition is blocked by VMP1. Enhanced by STRIT1/DWORF; STRIT1 increases activity by displacing sarcolipin (SLN), phospholamban (PLN) and myoregulin (MRLN). Stabilizes SERCA2 in its E2 state. This magnesium-dependent enzyme catalyzes the hydrolysis of ATP coupled with the translocation of calcium from the cytosol to the sarcoplasmic reticulum lumen. Involved in autophagy in response to starvation. Upon interaction with VMP1 and activation, controls ER-isolation membrane contacts for autophagosome formation. Also modulates ER contacts with lipid droplets, mitochondria and endosomes. In coordination with FLVCR2 mediates heme-stimulated switching from mitochondrial ATP synthesis to thermogenesis. Functionally, involved in the regulation of the contraction/relaxation cycle. Acts as a regulator of TNFSF11-mediated Ca(2+) signaling pathways via its interaction with TMEM64 which is critical for the TNFSF11-induced CREB1 activation and mitochondrial ROS generation necessary for proper osteoclast generation. Association between TMEM64 and SERCA2 in the ER leads to cytosolic Ca(2+) spiking for activation of NFATC1 and production of mitochondrial ROS, thereby triggering Ca(2+) signaling cascades that promote osteoclast differentiation and activation. The chain is Sarcoplasmic/endoplasmic reticulum calcium ATPase 2 from Mus musculus (Mouse).